The primary structure comprises 309 residues: tRNA pseudouridine synthase B (309 aa).

Aspartate 51 functions as the Nucleophile in the catalytic mechanism.

It belongs to the pseudouridine synthase TruB family. Type 1 subfamily.

The enzyme catalyses uridine(55) in tRNA = pseudouridine(55) in tRNA. In terms of biological role, responsible for synthesis of pseudouridine from uracil-55 in the psi GC loop of transfer RNAs. This chain is tRNA pseudouridine synthase B, found in Coxiella burnetii (strain Dugway 5J108-111).